A 295-amino-acid chain; its full sequence is Shikimate dehydrogenase (NADP(+)) (295 aa).

Shikimate is bound by residues 24 to 26 and threonine 71; that span reads SRS. Catalysis depends on lysine 75, which acts as the Proton acceptor. Glutamate 87 contacts NADP(+). The shikimate site is built by asparagine 96 and aspartate 111. NADP(+) contacts are provided by residues 136 to 140, 160 to 165, and methionine 233; these read GAGGA and NRTASR. Position 235 (tyrosine 235) interacts with shikimate. Glycine 256 is a binding site for NADP(+).

The protein belongs to the shikimate dehydrogenase family. As to quaternary structure, homodimer.

The catalysed reaction is shikimate + NADP(+) = 3-dehydroshikimate + NADPH + H(+). It participates in metabolic intermediate biosynthesis; chorismate biosynthesis; chorismate from D-erythrose 4-phosphate and phosphoenolpyruvate: step 4/7. In terms of biological role, involved in the biosynthesis of the chorismate, which leads to the biosynthesis of aromatic amino acids. Catalyzes the reversible NADPH linked reduction of 3-dehydroshikimate (DHSA) to yield shikimate (SA). This is Shikimate dehydrogenase (NADP(+)) from Cupriavidus taiwanensis (strain DSM 17343 / BCRC 17206 / CCUG 44338 / CIP 107171 / LMG 19424 / R1) (Ralstonia taiwanensis (strain LMG 19424)).